Consider the following 543-residue polypeptide: uncharacterized protein (543 aa).

A PE domain is found at 1 to 93; the sequence is MSFVTAAPEM…GGAYSSAEAA (93 aa). Residues 194-214 are disordered; it reads GGAGGPGGPTDVPAGTGGAGG.

It belongs to the mycobacterial PE family. PGRS subfamily.

This is an uncharacterized protein from Mycobacterium tuberculosis (strain CDC 1551 / Oshkosh).